The following is a 264-amino-acid chain: Cyclin-P1-1 (264 aa).

The disordered stretch occupies residues 1 to 25 (MDAAAAAGGEMSRQKATASAPPPPE).

It belongs to the cyclin family. Cyclin U/P subfamily.

The chain is Cyclin-P1-1 (CYCP1-1) from Oryza sativa subsp. japonica (Rice).